The sequence spans 417 residues: Chaperone SurA (417 aa).

A signal peptide spans 1–12 (MGAALLCSFAHA). PpiC domains follow at residues 163–264 (SEEY…KLEE) and 273–372 (RDEV…QVLG).

It localises to the periplasm. It carries out the reaction [protein]-peptidylproline (omega=180) = [protein]-peptidylproline (omega=0). Its function is as follows. Chaperone involved in the correct folding and assembly of outer membrane proteins. Recognizes specific patterns of aromatic residues and the orientation of their side chains, which are found more frequently in integral outer membrane proteins. May act in both early periplasmic and late outer membrane-associated steps of protein maturation. The sequence is that of Chaperone SurA from Pseudomonas aeruginosa (strain ATCC 15692 / DSM 22644 / CIP 104116 / JCM 14847 / LMG 12228 / 1C / PRS 101 / PAO1).